Consider the following 198-residue polypeptide: Dynein axonemal light chain 1 (198 aa).

LRR repeat units lie at residues 49–70 (ACKH…SGME), 71–92 (NLRI…DAVA), 94–115 (TLEE…EKLV), and 116–137 (NLRV…DKLA). An LRRCT domain is found at 157–195 (KENNATSEYRIEVVKRLPNLKKLDGMPVDVDEREQANVA).

It belongs to the dynein light chain LC1-type family. In terms of assembly, interacts with OCAD2, a outer arm dynein heavy chain. Interacts with tubulin (previously called p45) located within the A-tubule of the outer doublets in a ATP-independent manner.

The protein resides in the cytoplasm. It is found in the cytoskeleton. Its subcellular location is the flagellum axoneme. Its function is as follows. Part of the multisubunit axonemal ATPase complexes that generate the force for flagellar motility and govern beat frequency. Component of the outer arm dynein (ODA). May be involved in a mechanosensory feedback mechanism controlling ODA activity based on external conformational cues by tethering the outer arm dynein heavy chain (ODA2) to the A-tubule of the outer doublet microtubules within the axoneme. The polypeptide is Dynein axonemal light chain 1 (Chlamydomonas reinhardtii (Chlamydomonas smithii)).